A 33-amino-acid polypeptide reads, in one-letter code: Pardaxin P-5 (33 aa).

It belongs to the pardaxin family. As to quaternary structure, monomer. In aqueous solution exists as a tetramer.

The protein localises to the secreted. It is found in the target cell membrane. Its function is as follows. Exhibits unusual shark repellent and surfactant properties. Forms voltage-dependent, ion-permeable channels in membranes. At high concentration causes cell membrane lysis. The chain is Pardaxin P-5 from Pardachirus marmoratus (Finless sole).